We begin with the raw amino-acid sequence, 71 residues long: Ceratotoxin-A (71 aa).

The signal sequence occupies residues 1–23 (MANLKAVFLICIVAFIALQCVVA). 2 propeptides span residues 24-35 (EPAAEDSVVVKR) and 65-71 (VAAGLVG).

Homomer of four to six subunits.

It is found in the secreted. Functionally, female-specific peptides with potent activity against Gram-positive and Gram-negative bacteria. They have as well hemolytic activity. The chain is Ceratotoxin-A (CTXA1) from Ceratitis capitata (Mediterranean fruit fly).